Reading from the N-terminus, the 98-residue chain is Aspartyl/glutamyl-tRNA(Asn/Gln) amidotransferase subunit C (98 aa).

This sequence belongs to the GatC family. Heterotrimer of A, B and C subunits.

The enzyme catalyses L-glutamyl-tRNA(Gln) + L-glutamine + ATP + H2O = L-glutaminyl-tRNA(Gln) + L-glutamate + ADP + phosphate + H(+). It carries out the reaction L-aspartyl-tRNA(Asn) + L-glutamine + ATP + H2O = L-asparaginyl-tRNA(Asn) + L-glutamate + ADP + phosphate + 2 H(+). Its function is as follows. Allows the formation of correctly charged Asn-tRNA(Asn) or Gln-tRNA(Gln) through the transamidation of misacylated Asp-tRNA(Asn) or Glu-tRNA(Gln) in organisms which lack either or both of asparaginyl-tRNA or glutaminyl-tRNA synthetases. The reaction takes place in the presence of glutamine and ATP through an activated phospho-Asp-tRNA(Asn) or phospho-Glu-tRNA(Gln). This is Aspartyl/glutamyl-tRNA(Asn/Gln) amidotransferase subunit C from Bifidobacterium adolescentis (strain ATCC 15703 / DSM 20083 / NCTC 11814 / E194a).